Reading from the N-terminus, the 79-residue chain is U1-plectoxin-Pt1c (79 aa).

Positions 1–18 (HLILASALICALVVCTFA) are cleaved as a signal peptide. Positions 19–31 (EEQVNVPFLPDER) are excised as a propeptide. 5 cysteine pairs are disulfide-bonded: C35/C49, C42/C55, C48/C66, C52/C75, and C57/C64. The propeptide occupies 78–79 (RR).

This sequence belongs to the neurotoxin 02 (plectoxin) family. 02 (plectoxin) subfamily. Expressed by the venom gland.

It is found in the secreted. In terms of biological role, potent toxin that may paralyze and/or kill insect pests such as H.virescens (lepidoptera), S.exigua (beet armyworm) and M.sexta (tobacco hornworm). This Plectreurys tristis (Spider) protein is U1-plectoxin-Pt1c.